We begin with the raw amino-acid sequence, 1312 residues long: Angiotensin-converting enzyme (1312 aa).

Positions 1–34 are cleaved as a signal peptide; sequence MGAASGQRGRWPLSPPLLMLSLLVLLLQPSPAPA. Topologically, residues 35–1264 are extracellular; the sequence is LDPGLQPGNF…LEPQQARVGQ (1230 aa). Peptidase M2 domains lie at 45–629 and 648–1227; these read SPDE…LGWP and ETDE…LGWP. N-linked (GlcNAc...) asparagine glycans are attached at residues Asn-59, Asn-79, Asn-116, Asn-151, and Asn-165. The cysteines at positions 162 and 170 are disulfide-linked. Residue Tyr-236 participates in chloride binding. An N-linked (GlcNAc...) asparagine glycan is attached at Asn-323. A disulfide bond links Cys-364 and Cys-382. His-395 contacts Zn(2+). Glu-396 (proton acceptor 1) is an active-site residue. Positions 399 and 423 each coordinate Zn(2+). Asn-514 carries N-linked (GlcNAc...) asparagine glycosylation. The Proton donor 1 role is filled by His-525. Residue Arg-534 coordinates chloride. The cysteines at positions 550 and 562 are disulfide-linked. N-linked (GlcNAc...) asparagine glycosylation is present at Asn-682. N-linked (GlcNAc...) (complex) asparagine glycosylation is found at Asn-700 and Asn-719. An intrachain disulfide couples Cys-762 to Cys-768. The N-linked (GlcNAc...) asparagine glycan is linked to Asn-765. The chloride site is built by Arg-796 and Tyr-834. Asn-947 carries N-linked (GlcNAc...) asparagine glycosylation. Cys-962 and Cys-980 form a disulfide bridge. His-993 lines the Zn(2+) pocket. Glu-994 acts as the Proton acceptor 2 in catalysis. Zn(2+)-binding residues include His-997 and Glu-1021. Chloride is bound by residues Trp-1095 and Arg-1099. The active-site Proton donor 2 is the His-1123. Arg-1132 contributes to the chloride binding site. Cys-1148 and Cys-1160 are joined by a disulfide. Asn-1196 carries N-linked (GlcNAc...) asparagine glycosylation. A juxtamembrane stalk region spans residues 1220–1261; it reads HGETLGWPEYNWAPNTARAEGSTAESNRVNFLGLYLEPQQAR. A helical membrane pass occupies residues 1265 to 1281; it reads WVLLFLGVALLVATVGL. The Cytoplasmic segment spans residues 1282-1312; it reads AHRLYNIRNHHSLRRPHRGPQFGSEVELRHS. At Ser-1305 the chain carries Phosphoserine.

Belongs to the peptidase M2 family. Monomer and homodimer; homodimerizes following binding to an inhibitor. Interacts with calmodulin (CALM1, CALM2 or CALM3); interaction takes place in the cytoplasmic region and regulates phosphorylation and proteolytic cleavage. Zn(2+) is required as a cofactor. It depends on chloride as a cofactor. Post-translationally, produced following proteolytic cleavage by secretase enzymes that cleave the transmembrane form in the juxtamembrane stalk region upstream of the transmembrane region. Cleavage can take place at different sites of the juxtamembrane stalk region. In terms of processing, phosphorylated by CK2 on Ser-1305; which allows membrane retention. Phosphorylated on tyrosine residues on its extracellular part, promoting cleavage by secretase enzymes and formation of the soluble form (Angiotensin-converting enzyme, soluble form). As to expression, highly expressed in kidney and lung; not expressed in the liver. In the brain, expressed in the cerebral cortex, hippocampus, cerebellum and basal ganglia/brainstem. Highly expressed in dopamine receptor DRD1-expressing neurons in the dorsal striatum and the nucleus accumbens of the brain. In terms of tissue distribution, specifically expressed in spermatocytes, adult testis.

Its subcellular location is the cell membrane. The protein resides in the cytoplasm. It localises to the secreted. The enzyme catalyses Release of a C-terminal dipeptide, oligopeptide-|-Xaa-Yaa, when Xaa is not Pro, and Yaa is neither Asp nor Glu. Thus, conversion of angiotensin I to angiotensin II, with increase in vasoconstrictor activity, but no action on angiotensin II.. It carries out the reaction angiotensin I + H2O = L-histidyl-L-leucine + angiotensin II. It catalyses the reaction bradykinin + H2O = L-Phe-L-Arg + bradykinin(1-7). The catalysed reaction is substance P + H2O = substance P(1-9) + L-Leu-L-Met-NH2. The enzyme catalyses substance P + H2O = substance P(1-8) + Gly-L-Leu-L-Met-NH2. It carries out the reaction substance P + H2O = L-Phe-L-Phe-Gly-L-Leu-L-Met-NH2 + substance P(1-6). It catalyses the reaction neurotensin + H2O = neurotensin(1-11) + L-isoleucyl-L-leucine. The catalysed reaction is goralatide + H2O = N-acetyl-L-seryl-L-aspartate + L-lysyl-L-proline. The enzyme catalyses Met-enkephalin + H2O = L-phenylalanyl-L-methionine + L-tyrosylglycylglycine. It carries out the reaction Leu-enkephalin + H2O = L-tyrosylglycylglycine + L-phenylalanyl-L-leucine. It catalyses the reaction Met-enkephalin-Arg-Phe + H2O = L-arginyl-L-phenylalanine + Met-enkephalin. The dipeptidyl carboxypeptidase activity is specifically inhibited by lisinopril, captopril and enalaprilat. The N-terminal catalytic domain, but not the C-terminal catalytic domain, is specifically inhibited by the phosphinic peptide RXP 407. With respect to regulation, the putative GPIase activity is nearly insensitive to captopril. Dipeptidyl carboxypeptidase that removes dipeptides from the C-terminus of a variety of circulating hormones, such as angiotensin I, bradykinin or enkephalins, thereby playing a key role in the regulation of blood pressure, electrolyte homeostasis or synaptic plasticity. Composed of two similar catalytic domains, each possessing a functional active site, with different selectivity for substrates. Plays a major role in the angiotensin-renin system that regulates blood pressure and sodium retention by the kidney by converting angiotensin I to angiotensin II, resulting in an increase of the vasoconstrictor activity of angiotensin. Also able to inactivate bradykinin, a potent vasodilator, and therefore enhance the blood pressure response. Acts as a regulator of synaptic transmission by mediating cleavage of neuropeptide hormones, such as substance P, neurotensin or enkephalins. Catalyzes degradation of different enkephalin neuropeptides (Met-enkephalin, Leu-enkephalin, Met-enkephalin-Arg-Phe and possibly Met-enkephalin-Arg-Gly-Leu). Acts as a regulator of synaptic plasticity in the nucleus accumbens of the brain by mediating cleavage of Met-enkephalin-Arg-Phe, a strong ligand of Mu-type opioid receptor OPRM1, into Met-enkephalin. Met-enkephalin-Arg-Phe cleavage by ACE decreases activation of OPRM1, leading to long-term synaptic potentiation of glutamate release. Also acts as a regulator of hematopoietic stem cell differentiation by mediating degradation of hemoregulatory peptide N-acetyl-SDKP (AcSDKP). Acts as a regulator of cannabinoid signaling pathway by mediating degradation of hemopressin, an antagonist peptide of the cannabinoid receptor CNR1. Involved in amyloid-beta metabolism by catalyzing degradation of Amyloid-beta protein 40 and Amyloid-beta protein 42 peptides, thereby preventing plaque formation. Catalyzes cleavage of cholecystokinin (maturation of Cholecystokinin-8 and Cholecystokinin-5) and Gonadoliberin-1 (both maturation and degradation) hormones. Degradation of hemoregulatory peptide N-acetyl-SDKP (AcSDKP) and amyloid-beta proteins is mediated by the N-terminal catalytic domain, while angiotensin I and cholecystokinin cleavage is mediated by the C-terminal catalytic region. In terms of biological role, soluble form that is released in blood plasma and other body fluids following proteolytic cleavage in the juxtamembrane stalk region. Its function is as follows. Isoform produced by alternative promoter usage that is specifically expressed in spermatocytes and adult testis, and which is required for male fertility. In contrast to somatic isoforms, only contains one catalytic domain. Acts as a dipeptidyl carboxypeptidase that removes dipeptides from the C-terminus of substrates. The identity of substrates that are needed for male fertility is unknown. Isoform Testis-specific and isoform Somatic have distinct activities and cannot completely compensate for the loss of the other when expressed in somatic tissues or testis. May also have a glycosidase activity which releases GPI-anchored proteins from the membrane by cleaving the mannose linkage in the GPI moiety. The GPIase activity was reported to be essential for the egg-binding ability of the sperm. This activity is however unclear and has been challenged by other groups, suggesting that it may be indirect. This Mus musculus (Mouse) protein is Angiotensin-converting enzyme.